The following is a 708-amino-acid chain: Outer capsid protein mu-1 (708 aa).

The N-myristoyl glycine; by host moiety is linked to residue Gly-2. N-linked (GlcNAc...) asparagine; by host glycans are attached at residues Asn-3, Asn-12, Asn-81, Asn-110, Asn-458, Asn-482, Asn-528, and Asn-659. A disordered region spans residues Pro-675–Arg-708.

It belongs to the orthoreovirus mu-1 protein family. Heterohexamer of three sigma-3 and three Mu-1 proteins. Cleaved during the endosomal proteolytic disassembly of the outer capsid. Mu-1 is proteolytically cleaved into mu-1N and mu-1C during the maturation step to generate the ISVP. Cleavage of mu-1 to mu-1C is dependent on myristoylation and binding to sigma-3 protein. Mu-1C is further cleaved into delta (59 kDa), and phi (13 kDa) segments during entry into the host cell cytoplasm. In terms of processing, mu-1 and mu-1N are N-terminally myristoylated. This acylation is essential for the membrane fusion activity.

Its subcellular location is the virion. It localises to the host cell membrane. The protein localises to the host endoplasmic reticulum. The protein resides in the host mitochondrion. Its function is as follows. Major outer capsid protein involved in host cell membrane penetration. In the endocytic compartment, outer-capsid protein sigma-3 is removed by cathepsin proteases, which exposes the viral membrane-penetration protein mu-1. Both myristoylated peptides mu-1N and phi are released during infectious subvirion particles (ISVP) formation in the endosome. They associate with host membranes and mu-1N induces permeabilization and delivery of transcriptionally active viral particles into the host cell cytoplasm. Seems to induce apoptosis in the host cell. In terms of biological role, the viral outer shell polypeptides, of which mu-1 is one, impose structural constraints that prevent elongation of nascent transcripts by the RNA-dependent RNA polymerase lambda-3. In Mammalia (T3D), this protein is Outer capsid protein mu-1 (M2).